Reading from the N-terminus, the 181-residue chain is Large ribosomal subunit protein uL6 (181 aa).

Belongs to the universal ribosomal protein uL6 family. Part of the 50S ribosomal subunit.

Its function is as follows. This protein binds to the 23S rRNA, and is important in its secondary structure. It is located near the subunit interface in the base of the L7/L12 stalk, and near the tRNA binding site of the peptidyltransferase center. The polypeptide is Large ribosomal subunit protein uL6 (Rhodopirellula baltica (strain DSM 10527 / NCIMB 13988 / SH1)).